Reading from the N-terminus, the 338-residue chain is MIQLEGVSVDFSQGKQPSNLAVDNVSLHIQRGEVYGIVGTSGAGKSTLLRTINLLQRPTSGRVLVNGVLISELAGQPLREQRQKIGMIFQHFNLMQTRTVTENVAFSLKAAGKSNAEITLRVPEILSLVGLSDKASSYPAQLSGGQKQRVGIARAIANDPEVLLCDEPTSALDLETSAAILALLKEINEKLGITIVLISHEMSVIKAVCDRVAVMTGGRVVEEGDVFDIFATPQHAFTRQLVSHTLDLALPPRLLEDLQGTLLKILFVGESAEQPVLSDVATRFGVSVNILHGKIEYIGNRALGILVALLTHPSDPEKVAEAVEHIQVRTANVEVLHG.

The ABC transporter domain maps to 2 to 242; sequence IQLEGVSVDF…PQHAFTRQLV (241 aa). 39–46 lines the ATP pocket; that stretch reads GTSGAGKS.

It belongs to the ABC transporter superfamily. Methionine importer (TC 3.A.1.24) family. In terms of assembly, the complex is composed of two ATP-binding proteins (MetN), two transmembrane proteins (MetI) and a solute-binding protein (MetQ).

Its subcellular location is the cell inner membrane. It carries out the reaction L-methionine(out) + ATP + H2O = L-methionine(in) + ADP + phosphate + H(+). It catalyses the reaction D-methionine(out) + ATP + H2O = D-methionine(in) + ADP + phosphate + H(+). In terms of biological role, part of the ABC transporter complex MetNIQ involved in methionine import. Responsible for energy coupling to the transport system. This chain is Methionine import ATP-binding protein MetN 2, found in Pectobacterium atrosepticum (strain SCRI 1043 / ATCC BAA-672) (Erwinia carotovora subsp. atroseptica).